The primary structure comprises 136 residues: uncharacterized protein (136 aa).

This is an uncharacterized protein from Gallus gallus (Chicken).